Reading from the N-terminus, the 477-residue chain is Glycogen synthase (477 aa).

Lysine 15 serves as a coordination point for ADP-alpha-D-glucose.

It belongs to the glycosyltransferase 1 family. Bacterial/plant glycogen synthase subfamily.

The catalysed reaction is [(1-&gt;4)-alpha-D-glucosyl](n) + ADP-alpha-D-glucose = [(1-&gt;4)-alpha-D-glucosyl](n+1) + ADP + H(+). It functions in the pathway glycan biosynthesis; glycogen biosynthesis. In terms of biological role, synthesizes alpha-1,4-glucan chains using ADP-glucose. The chain is Glycogen synthase from Shigella flexneri.